A 260-amino-acid polypeptide reads, in one-letter code: Tryptophan synthase alpha chain (260 aa).

Catalysis depends on proton acceptor residues E52 and D63.

Belongs to the TrpA family. Tetramer of two alpha and two beta chains.

It carries out the reaction (1S,2R)-1-C-(indol-3-yl)glycerol 3-phosphate + L-serine = D-glyceraldehyde 3-phosphate + L-tryptophan + H2O. It functions in the pathway amino-acid biosynthesis; L-tryptophan biosynthesis; L-tryptophan from chorismate: step 5/5. In terms of biological role, the alpha subunit is responsible for the aldol cleavage of indoleglycerol phosphate to indole and glyceraldehyde 3-phosphate. This is Tryptophan synthase alpha chain from Streptococcus mutans serotype c (strain ATCC 700610 / UA159).